A 78-amino-acid polypeptide reads, in one-letter code: Large ribosomal subunit protein bL28 (78 aa).

The segment at 1–20 (MSRVCQVTGKRPAVGNNRSH) is disordered.

The protein belongs to the bacterial ribosomal protein bL28 family.

The polypeptide is Large ribosomal subunit protein bL28 (Actinobacillus succinogenes (strain ATCC 55618 / DSM 22257 / CCUG 43843 / 130Z)).